The primary structure comprises 195 residues: Orotate phosphoribosyltransferase (195 aa).

Residues arginine 86, lysine 90, histidine 92, and 111–119 each bind 5-phospho-alpha-D-ribose 1-diphosphate; that span reads DDVATTGVS. Positions 115 and 143 each coordinate orotate.

Belongs to the purine/pyrimidine phosphoribosyltransferase family. PyrE subfamily. In terms of assembly, homodimer. It depends on Mg(2+) as a cofactor.

The enzyme catalyses orotidine 5'-phosphate + diphosphate = orotate + 5-phospho-alpha-D-ribose 1-diphosphate. The protein operates within pyrimidine metabolism; UMP biosynthesis via de novo pathway; UMP from orotate: step 1/2. Catalyzes the transfer of a ribosyl phosphate group from 5-phosphoribose 1-diphosphate to orotate, leading to the formation of orotidine monophosphate (OMP). This chain is Orotate phosphoribosyltransferase, found in Saccharolobus solfataricus (strain ATCC 35092 / DSM 1617 / JCM 11322 / P2) (Sulfolobus solfataricus).